A 687-amino-acid chain; its full sequence is Transcription activator of gluconeogenesis SNOG_12336 (687 aa).

The segment at 1–56 is disordered; it reads MASPDAEDASPSPEYRSDLDDDMAAEQKTDDGSPSQKSSNGQKPASNAKDPLRPRR. The span at 32–45 shows a compositional bias: polar residues; that stretch reads GSPSQKSSNGQKPA. A DNA-binding region (zn(2)-C6 fungal-type) is located at residues 63 to 91; it reads CFACQRAHLTCGDERPCTRCIKRGLQDHC. Polar residues-rich tracts occupy residues 150–159 and 169–179; these read PSGTFYQPPS and HGRSFSDQQSP. Disordered regions lie at residues 150–214, 300–411, and 536–561; these read PSGT…GPLF, ESQS…KRHR, and GNSR…GQEA. The segment covering 195–212 has biased composition (low complexity); sequence PPSSISQGQPGQMQQFGP. Over residues 300 to 318 the composition is skewed to polar residues; that stretch reads ESQSRQNSMHIHTPTSSAT. Over residues 342–357 the composition is skewed to low complexity; it reads PSSHSTASPASTDASA. 3 stretches are compositionally biased toward polar residues: residues 362-384, 392-402, and 546-561; these read NPLS…SPTT, RPPSTALQPIH, and MSTQ…GQEA. Residues 482–553 enclose the PAS domain; that stretch reads NLMTLQDHFT…SEMSTQTNTT (72 aa).

Belongs to the ERT1/acuK family.

The protein resides in the nucleus. In terms of biological role, transcription factor which regulates nonfermentable carbon utilization. Activator of gluconeogenetic genes. The polypeptide is Transcription activator of gluconeogenesis SNOG_12336 (Phaeosphaeria nodorum (strain SN15 / ATCC MYA-4574 / FGSC 10173) (Glume blotch fungus)).